The primary structure comprises 259 residues: Bisphosphoglycerate mutase (259 aa).

S2 is subject to N-acetylserine. Substrate-binding positions include 10–17 (RHGEGQWN), 23–24 (CS), R62, 89–92 (ERHY), R100, and 116–117 (RR). The active-site Tele-phosphohistidine intermediate is H11. E89 serves as the catalytic Proton donor/acceptor. Phosphothreonine is present on T122. Substrate is bound at residue 189–190 (GN).

The protein belongs to the phosphoglycerate mutase family. BPG-dependent PGAM subfamily. As to quaternary structure, homodimer. In terms of tissue distribution, expressed in red blood cells. Expressed in placenta (labyrinthine trophoblasts).

The enzyme catalyses (2R)-3-phospho-glyceroyl phosphate = (2R)-2,3-bisphosphoglycerate + H(+). It carries out the reaction (2R)-2-phosphoglycerate = (2R)-3-phosphoglycerate. Its activity is regulated as follows. At alkaline pH BPGM favors the synthase reaction; however, at lower pH the phosphatase reaction is dominant. Inhibited by citrate. Plays a major role in regulating hemoglobin oxygen affinity by controlling the levels of its allosteric effector 2,3-bisphosphoglycerate (2,3-BPG). Also exhibits mutase (EC 5.4.2.11) activity. This Mus musculus (Mouse) protein is Bisphosphoglycerate mutase (Bpgm).